Consider the following 138-residue polypeptide: MRRFRPLTWLAIGFVKGWRALISPLYGDVCKYQPSCSTYGLRALQVHGVFRATPMIIWRILRCNPWSHGGYDPVPGTPEARQWRELHPETARSKNEPIHDLTDDNPRDHEPALRKSIPGYTDPGSTHTGTPSHTRGEN.

A disordered region spans residues Y71–N138. A compositionally biased stretch (basic and acidic residues) spans R81–L113. Polar residues predominate over residues P123–N138.

This sequence belongs to the UPF0161 family.

It localises to the cell membrane. Could be involved in insertion of integral membrane proteins into the membrane. In Cutibacterium acnes (strain DSM 16379 / KPA171202) (Propionibacterium acnes), this protein is Putative membrane protein insertion efficiency factor.